A 217-amino-acid chain; its full sequence is Probable transaldolase (217 aa).

K83 serves as the catalytic Schiff-base intermediate with substrate.

Belongs to the transaldolase family. Type 3B subfamily.

The protein resides in the cytoplasm. The enzyme catalyses D-sedoheptulose 7-phosphate + D-glyceraldehyde 3-phosphate = D-erythrose 4-phosphate + beta-D-fructose 6-phosphate. The protein operates within carbohydrate degradation; pentose phosphate pathway; D-glyceraldehyde 3-phosphate and beta-D-fructose 6-phosphate from D-ribose 5-phosphate and D-xylulose 5-phosphate (non-oxidative stage): step 2/3. Functionally, transaldolase is important for the balance of metabolites in the pentose-phosphate pathway. The sequence is that of Probable transaldolase from Roseobacter denitrificans (strain ATCC 33942 / OCh 114) (Erythrobacter sp. (strain OCh 114)).